The following is a 365-amino-acid chain: MINLRGVKMFDKLEEVVARYDELNKMLVSPEVLADSKKMIECNKAINEITEIVEKYKEYKKYVDDIEFIKESFKTEKDSDMKEMLNEELKEAEEKLPKLEEELKILLLPKDKNDDKNVIVEIRGGAGGDEAALFAADLFRMYSRYAERKKWKIEIIEKQDGELNGLKEIAFTIIGLGAYSRLKFESGVHRVQRVPKTEASGRIHTSTATVAVLPEVEDIQEVTVDPKDLKIDTYRSGGAGGQHVNMTDSAVRITHLPTGIVVQCQDERSQLKNREKAMKHLLTKLYEMEQEKQRSEVESERRLQVGTGDRAEKIRTYNFPDGRITDHRIKLTVHQLEAFLDGDIDEMIDALITFHQAELLSASEQ.

Residue glutamine 242 is modified to N5-methylglutamine.

Belongs to the prokaryotic/mitochondrial release factor family. Post-translationally, methylated by PrmC. Methylation increases the termination efficiency of RF1.

The protein localises to the cytoplasm. Its function is as follows. Peptide chain release factor 1 directs the termination of translation in response to the peptide chain termination codons UAG and UAA. This is Peptide chain release factor 1 from Fusobacterium nucleatum subsp. nucleatum (strain ATCC 25586 / DSM 15643 / BCRC 10681 / CIP 101130 / JCM 8532 / KCTC 2640 / LMG 13131 / VPI 4355).